The chain runs to 629 residues: tRNA uridine 5-carboxymethylaminomethyl modification enzyme MnmG (629 aa).

Gly13 to Gly18 contributes to the FAD binding site. Gly273–Phe287 lines the NAD(+) pocket.

The protein belongs to the MnmG family. Homodimer. Heterotetramer of two MnmE and two MnmG subunits. It depends on FAD as a cofactor.

Its subcellular location is the cytoplasm. NAD-binding protein involved in the addition of a carboxymethylaminomethyl (cmnm) group at the wobble position (U34) of certain tRNAs, forming tRNA-cmnm(5)s(2)U34. The sequence is that of tRNA uridine 5-carboxymethylaminomethyl modification enzyme MnmG from Hahella chejuensis (strain KCTC 2396).